Here is a 53-residue protein sequence, read N- to C-terminus: Conotoxin Bu27 (53 aa).

The propeptide occupies 1–12 (ASDGRNAVVHER). A 4-hydroxyproline modification is found at Pro-14. Glu-15 is modified (4-carboxyglutamate). 2 O-linked (HexNAc...) threonine glycosylation sites follow: Thr-19 and Thr-21. A 4-hydroxyproline mark is found at Pro-29, Pro-34, Pro-35, Pro-43, Pro-44, and Pro-48. Position 48 is a proline amide (Pro-48). Positions 49-53 (GRRND) are excised as a propeptide.

This sequence belongs to the conotoxin A superfamily. Contains 3 disulfide bonds. Expressed by the venom duct.

The protein localises to the secreted. In terms of biological role, probable neurotoxin with ion channel inhibitor activity. The sequence is that of Conotoxin Bu27 from Conus bullatus (Bubble cone).